The primary structure comprises 213 residues: uncharacterized protein (213 aa).

The next 3 helical transmembrane spans lie at 26–46, 112–132, and 136–156; these read FINF…GLKV, ASYI…AGIW, and AGLA…SFLI.

It localises to the cell membrane. This is an uncharacterized protein from Haemophilus influenzae (strain ATCC 51907 / DSM 11121 / KW20 / Rd).